The primary structure comprises 338 residues: 1-aminocyclopropane-1-carboxylate deaminase (338 aa).

K51 bears the N6-(pyridoxal phosphate)lysine mark. Residue S78 is the Nucleophile of the active site.

Belongs to the ACC deaminase/D-cysteine desulfhydrase family. As to quaternary structure, homotrimer. The cofactor is pyridoxal 5'-phosphate.

It carries out the reaction 1-aminocyclopropane-1-carboxylate + H2O = 2-oxobutanoate + NH4(+). Its function is as follows. Catalyzes a cyclopropane ring-opening reaction, the irreversible conversion of 1-aminocyclopropane-1-carboxylate (ACC) to ammonia and alpha-ketobutyrate. Allows growth on ACC as a nitrogen source. The sequence is that of 1-aminocyclopropane-1-carboxylate deaminase from Burkholderia pseudomallei (strain 1710b).